Consider the following 1114-residue polypeptide: Filamentous growth regulator 23 (1114 aa).

The N-terminal stretch at 1-21 (MFASYLLLVLWIIRLVPTTHA) is a signal peptide. Disordered stretches follow at residues 232–256 (GSET…PSTT) and 284–314 (SSSI…TSSS). Residues 240-252 (TTAPKPVETPSPE) show a composition bias toward pro residues. N-linked (GlcNAc...) asparagine glycosylation is found at Asn-382, Asn-397, Asn-475, Asn-490, Asn-506, Asn-539, Asn-565, Asn-591, Asn-637, Asn-687, and Asn-739. The segment at 392 to 430 (SETTTNESSSYTDEPSSSEEITNTYEPSSSTESSTTDQF) is disordered. Residues 764–784 (TSTLTSSHTSDNEKPASLSSS) form a disordered region. Asn-831 carries an N-linked (GlcNAc...) asparagine glycan. Low complexity-rich tracts occupy residues 844-910 (SASS…SSSS) and 922-941 (SSSV…ESSS). A disordered region spans residues 844–963 (SASSSYHSSE…ANENTSEITT (120 aa)). Residues 942–963 (NGLVSTVTESSTANENTSEITT) are compositionally biased toward polar residues. Asn-957, Asn-966, and Asn-1070 each carry an N-linked (GlcNAc...) asparagine glycan. Residue Asn-1089 is the site of GPI-anchor amidated asparagine attachment. The propeptide at 1090-1114 (ANSLGLKNGDNSWIIGIMMIGLLMI) is removed in mature form.

The protein localises to the cell membrane. Putative adhesin which may be involved in cell adhesion and virulence. Involved in the regulation of filamentous growth. The polypeptide is Filamentous growth regulator 23 (FGR23) (Candida albicans (strain SC5314 / ATCC MYA-2876) (Yeast)).